Here is a 227-residue protein sequence, read N- to C-terminus: PKHD-type hydroxylase Pden_4677 (227 aa).

The 101-residue stretch at 78–178 (HILPPMFNRY…RWASFFWAQS (101 aa)) folds into the Fe2OG dioxygenase domain. Residues H96, D98, and H159 each contribute to the Fe cation site. R169 contacts 2-oxoglutarate.

It depends on Fe(2+) as a cofactor. Requires L-ascorbate as cofactor.

This Paracoccus denitrificans (strain Pd 1222) protein is PKHD-type hydroxylase Pden_4677.